The sequence spans 272 residues: uncharacterized protein (272 aa).

A disordered region spans residues 101–130 (CPTGKKNKAPSSLIPKISKTSTSSLTKEDE). Residues 110–125 (PSSLIPKISKTSTSSL) are compositionally biased toward low complexity. Phosphoserine is present on serine 142.

This is an uncharacterized protein from Arabidopsis thaliana (Mouse-ear cress).